The sequence spans 155 residues: Ribosome maturation factor RimP (155 aa).

Belongs to the RimP family.

The protein resides in the cytoplasm. In terms of biological role, required for maturation of 30S ribosomal subunits. This chain is Ribosome maturation factor RimP, found in Salinibacter ruber (strain DSM 13855 / M31).